The primary structure comprises 267 residues: Chlorophyll a-b binding protein 3B, chloroplastic (267 aa).

A chloroplast-targeting transit peptide spans M1 to T34. Residues K19–X52 are disordered. The chain crosses the membrane as a helical span at residues L153–V173. V154, S158, Q166, E174, R177, and L183 together coordinate chlorophyll b. 7 residues coordinate chlorophyll a: K214, E215, N218, R220, Q232, H247, and A256. A helical transmembrane segment spans residues L221–L241. F263 is a binding site for chlorophyll b.

The protein belongs to the light-harvesting chlorophyll a/b-binding (LHC) protein family. As to quaternary structure, the LHC complex consists of chlorophyll a-b binding proteins. Requires Binds at least 14 chlorophylls (8 Chl-a and 6 Chl-b) and carotenoids such as lutein and neoxanthin. as cofactor. Post-translationally, photoregulated by reversible phosphorylation of its threonine residues.

Its subcellular location is the plastid. The protein resides in the chloroplast thylakoid membrane. The light-harvesting complex (LHC) functions as a light receptor, it captures and delivers excitation energy to photosystems with which it is closely associated. The protein is Chlorophyll a-b binding protein 3B, chloroplastic (CAB3B) of Solanum lycopersicum (Tomato).